The chain runs to 305 residues: tRNA dimethylallyltransferase (305 aa).

Residue 9-16 (GPTASGKS) coordinates ATP. Residue 11 to 16 (TASGKS) coordinates substrate. The segment at 34-37 (DSKQ) is interaction with substrate tRNA.

This sequence belongs to the IPP transferase family. As to quaternary structure, monomer. It depends on Mg(2+) as a cofactor.

The enzyme catalyses adenosine(37) in tRNA + dimethylallyl diphosphate = N(6)-dimethylallyladenosine(37) in tRNA + diphosphate. In terms of biological role, catalyzes the transfer of a dimethylallyl group onto the adenine at position 37 in tRNAs that read codons beginning with uridine, leading to the formation of N6-(dimethylallyl)adenosine (i(6)A). The chain is tRNA dimethylallyltransferase from Anaplasma marginale (strain Florida).